The primary structure comprises 484 residues: tRNA sulfurtransferase (484 aa).

Residues 63-167 form the THUMP domain; that stretch reads EAFADRLSCI…RENLYLVVNR (105 aa). Residues 185 to 186, Lys267, Gly289, and Gln298 each bind ATP; that span reads LI. Cysteines 346 and 458 form a disulfide. The Rhodanese domain occupies 406–484; it reads VNSNEVIIDV…GYENVKVYRP (79 aa). The Cysteine persulfide intermediate role is filled by Cys458.

Belongs to the ThiI family.

The protein resides in the cytoplasm. The catalysed reaction is [ThiI sulfur-carrier protein]-S-sulfanyl-L-cysteine + a uridine in tRNA + 2 reduced [2Fe-2S]-[ferredoxin] + ATP + H(+) = [ThiI sulfur-carrier protein]-L-cysteine + a 4-thiouridine in tRNA + 2 oxidized [2Fe-2S]-[ferredoxin] + AMP + diphosphate. It carries out the reaction [ThiS sulfur-carrier protein]-C-terminal Gly-Gly-AMP + S-sulfanyl-L-cysteinyl-[cysteine desulfurase] + AH2 = [ThiS sulfur-carrier protein]-C-terminal-Gly-aminoethanethioate + L-cysteinyl-[cysteine desulfurase] + A + AMP + 2 H(+). Its pathway is cofactor biosynthesis; thiamine diphosphate biosynthesis. Catalyzes the ATP-dependent transfer of a sulfur to tRNA to produce 4-thiouridine in position 8 of tRNAs, which functions as a near-UV photosensor. Also catalyzes the transfer of sulfur to the sulfur carrier protein ThiS, forming ThiS-thiocarboxylate. This is a step in the synthesis of thiazole, in the thiamine biosynthesis pathway. The sulfur is donated as persulfide by IscS. The polypeptide is tRNA sulfurtransferase (Shewanella sediminis (strain HAW-EB3)).